Here is a 216-residue protein sequence, read N- to C-terminus: Small ribosomal subunit protein uS4 (216 aa).

An S4 RNA-binding domain is found at 111 to 175; that stretch reads RRLQTQVLRL…SPLVSESHPE (65 aa). The tract at residues 194–216 is disordered; sequence VAEAKQAKEKPPERGGRKRRGRR. Residues 198-208 are compositionally biased toward basic and acidic residues; the sequence is KQAKEKPPERG.

This sequence belongs to the universal ribosomal protein uS4 family. In terms of assembly, part of the 30S ribosomal subunit. Contacts protein S5. The interaction surface between S4 and S5 is involved in control of translational fidelity.

Functionally, one of the primary rRNA binding proteins, it binds directly to 16S rRNA where it nucleates assembly of the body of the 30S subunit. Its function is as follows. With S5 and S12 plays an important role in translational accuracy. The protein is Small ribosomal subunit protein uS4 of Methanosarcina barkeri (strain Fusaro / DSM 804).